Here is a 617-residue protein sequence, read N- to C-terminus: Zinc finger protein 221 (617 aa).

Positions 30-100 constitute a KRAB domain; the sequence is VTFKDVAVVF…KTTSQREGNS (71 aa). 3 consecutive C2H2-type zinc fingers follow at residues 170–192, 198–220, and 226–248; these read YRCN…QQSH, HTCG…QRVH, and YKCD…QRVH. The C2H2-type 4; degenerate zinc-finger motif lies at 254 to 276; the sequence is FKCGQCGKGFHSRSALNVHCKLH. 11 C2H2-type zinc fingers span residues 282-304, 310-332, 338-360, 366-388, 394-416, 422-444, 450-472, 478-500, 506-528, 534-556, and 562-584; these read YNCE…QRIH, FKCD…SMVH, FRCD…SMVH, YKCE…QMVH, YNCK…QQVH, FKCE…QRSH, YNCE…QRVH, YNCK…QRLH, FKCE…QTCH, and YKCE…QRVH.

This sequence belongs to the krueppel C2H2-type zinc-finger protein family.

Its subcellular location is the nucleus. May be involved in transcriptional regulation. This is Zinc finger protein 221 (ZNF221) from Homo sapiens (Human).